The chain runs to 448 residues: Mitochondrial distribution and morphology protein 10 (448 aa).

The protein belongs to the MDM10 family. As to quaternary structure, component of the ER-mitochondria encounter structure (ERMES) or MDM complex, composed of MMM1, MDM10, MDM12 and MDM34. Associates with the mitochondrial outer membrane sorting assembly machinery SAM(core) complex.

The protein localises to the mitochondrion outer membrane. Functionally, component of the ERMES/MDM complex, which serves as a molecular tether to connect the endoplasmic reticulum and mitochondria. Components of this complex are involved in the control of mitochondrial shape and protein biogenesis and may function in phospholipid exchange. MDM10 is involved in the late assembly steps of the general translocase of the mitochondrial outer membrane (TOM complex). Functions in the TOM40-specific route of the assembly of outer membrane beta-barrel proteins, including the association of TOM40 with the receptor TOM22 and small TOM proteins. Can associate with the SAM(core) complex as well as the MDM12-MMM1 complex, both involved in late steps of the major beta-barrel assembly pathway, that is responsible for biogenesis of all outer membrane beta-barrel proteins. May act as a switch that shuttles between both complexes and channels precursor proteins into the TOM40-specific pathway. Plays a role in mitochondrial morphology and in the inheritance of mitochondria. The sequence is that of Mitochondrial distribution and morphology protein 10 from Zygosaccharomyces rouxii (strain ATCC 2623 / CBS 732 / NBRC 1130 / NCYC 568 / NRRL Y-229).